Here is a 385-residue protein sequence, read N- to C-terminus: S-adenosylmethionine synthase (385 aa).

An ATP-binding site is contributed by His-16. Asp-18 contributes to the Mg(2+) binding site. Glu-44 contributes to the K(+) binding site. L-methionine-binding residues include Glu-57 and Gln-100. The tract at residues 100–110 (QSPDINQGVDR) is flexible loop. ATP contacts are provided by residues 164-166 (DGK), 230-231 (KF), Asp-239, 245-246 (RK), Ala-262, and Lys-266. Asp-239 contributes to the L-methionine binding site. An L-methionine-binding site is contributed by Lys-270.

Belongs to the AdoMet synthase family. In terms of assembly, homotetramer; dimer of dimers. The cofactor is Mg(2+). Requires K(+) as cofactor.

It localises to the cytoplasm. The enzyme catalyses L-methionine + ATP + H2O = S-adenosyl-L-methionine + phosphate + diphosphate. It functions in the pathway amino-acid biosynthesis; S-adenosyl-L-methionine biosynthesis; S-adenosyl-L-methionine from L-methionine: step 1/1. Its function is as follows. Catalyzes the formation of S-adenosylmethionine (AdoMet) from methionine and ATP. The overall synthetic reaction is composed of two sequential steps, AdoMet formation and the subsequent tripolyphosphate hydrolysis which occurs prior to release of AdoMet from the enzyme. In Helicobacter pylori (strain HPAG1), this protein is S-adenosylmethionine synthase.